Reading from the N-terminus, the 75-residue chain is Xibalbin-13 2 (75 aa).

The signal sequence occupies residues 1-27; the sequence is MKEANTRRYIYLCLVVVLLSIIITTEA. Residues 28 to 30 constitute a propeptide that is removed on maturation; the sequence is EDD. 4 cysteine pairs are disulfide-bonded: cysteine 34–cysteine 49, cysteine 41–cysteine 54, cysteine 48–cysteine 65, and cysteine 56–cysteine 63.

It belongs to the xibalbin-13 family. As to expression, expressed by the venom gland and the whole body.

The protein localises to the secreted. Its function is as follows. Probable neurotoxin. Strongly inhibits voltage-gated potassium channels (Kv1.1/KCNA1, Kv1.2/KCNA2, Kv1.3/KCNA3, and Kv1.6/KCNA6, with the highest toxicity against Kv1.1 (85.1% inhibition at 1 uM)) and mildly inhibits sodium channels (Nav1.2/SCN2A, Nav1.4/SCN4A, Nav1.5/SCN5A, Nav1.6/SCN8A, and BgNav). Induces activation of protein kinase A type II (PKA-II) and MAP kinase Erk1/2 in primary nociceptive and non-nociceptive sensory neurons. Does not show cytotoxic activity. Does not have an impact on Ca2+, cAMP, and NO signaling in the cell types analyzed. Does not interfere with the adhesion of leukocytes to endothelial cells. The sequence is that of Xibalbin-13 2 from Xibalbanus tulumensis (Blind cave remipede).